We begin with the raw amino-acid sequence, 99 residues long: UPF0235 protein ASA_3628 (99 aa).

It belongs to the UPF0235 family.

In Aeromonas salmonicida (strain A449), this protein is UPF0235 protein ASA_3628.